We begin with the raw amino-acid sequence, 312 residues long: GTP cyclohydrolase MptA (312 aa).

It belongs to the GTP cyclohydrolase IV family. Homodimer. Fe(2+) serves as cofactor.

It carries out the reaction GTP + H2O = 7,8-dihydroneopterin 2',3'-cyclic phosphate + formate + diphosphate + H(+). It functions in the pathway cofactor biosynthesis; 5,6,7,8-tetrahydromethanopterin biosynthesis. Functionally, converts GTP to 7,8-dihydro-D-neopterin 2',3'-cyclic phosphate, the first intermediate in the biosynthesis of coenzyme methanopterin. This Methanococcus vannielii (strain ATCC 35089 / DSM 1224 / JCM 13029 / OCM 148 / SB) protein is GTP cyclohydrolase MptA.